The following is a 39-amino-acid chain: Cytochrome b559 subunit beta (39 aa).

Residues 14–30 (WLAIHGLAVPTVFSLGS) form a helical membrane-spanning segment. Histidine 18 contributes to the heme binding site.

This sequence belongs to the PsbE/PsbF family. In terms of assembly, heterodimer of an alpha subunit and a beta subunit. PSII is composed of 1 copy each of membrane proteins PsbA, PsbB, PsbC, PsbD, PsbE, PsbF, PsbH, PsbI, PsbJ, PsbK, PsbL, PsbM, PsbT, PsbX, PsbY, PsbZ, Psb30/Ycf12, at least 3 peripheral proteins of the oxygen-evolving complex and a large number of cofactors. It forms dimeric complexes. The cofactor is heme b.

The protein localises to the plastid. Its subcellular location is the chloroplast thylakoid membrane. In terms of biological role, this b-type cytochrome is tightly associated with the reaction center of photosystem II (PSII). PSII is a light-driven water:plastoquinone oxidoreductase that uses light energy to abstract electrons from H(2)O, generating O(2) and a proton gradient subsequently used for ATP formation. It consists of a core antenna complex that captures photons, and an electron transfer chain that converts photonic excitation into a charge separation. The chain is Cytochrome b559 subunit beta from Huperzia lucidula (Shining clubmoss).